Reading from the N-terminus, the 626-residue chain is Polygalacturonase 1 beta-like protein 3 (626 aa).

The signal sequence occupies residues 1-23 (MLKQFLLLQSFSFFLFNVVIVGG). An FXXY 1 repeat occupies 117-120 (FSVY). A glycan (N-linked (GlcNAc...) asparagine) is linked at asparagine 124. FXXY repeat units lie at residues 125–128 (FTNY), 139–142 (FKNY), 153–156 (FRRY), 167–170 (FTVY), 181–184 (FNSY), 195–198 (FTNY), 209–212 (FTAY), 223–226 (FKTY), 238–241 (FTSY), 252–255 (FTSY), and 266–269 (FSNY). Asparagine 141 is a glycosylation site (N-linked (GlcNAc...) asparagine). Asparagine 277 carries an N-linked (GlcNAc...) asparagine glycan. FXXY repeat units follow at residues 280–283 (FTSY), 294–297 (FNNY), 308–311 (FANY), 322–325 (FSSY), 336–339 (FVNY), 350–353 (FTGY), and 364–367 (FKTY). N-linked (GlcNAc...) asparagine glycosylation is present at asparagine 370. FXXY repeat units lie at residues 373 to 376 (FKDY) and 383 to 386 (FAKY). Residues asparagine 387 and asparagine 465 are each glycosylated (N-linked (GlcNAc...) asparagine). The BURP domain occupies 411–625 (FFRESSLKEG…FENDMNWAIA (215 aa)).

Expressed in flowers and stems. Detected in trichomes, guard cells, root vascular tissue, root hairs, pollen sacs, sepals and styles of pistils.

The protein localises to the secreted. It localises to the extracellular space. The protein resides in the apoplast. It is found in the cell wall. Functionally, involved in cell size determination. May serve as a chaperone for expansins through the secretory pathway. The protein is Polygalacturonase 1 beta-like protein 3 of Arabidopsis thaliana (Mouse-ear cress).